Reading from the N-terminus, the 539-residue chain is Dihydrolipoyllysine-residue acetyltransferase component 3 of pyruvate dehydrogenase complex, mitochondrial (539 aa).

A mitochondrion-targeting transit peptide spans 1–102; that stretch reads MAYASRIINH…SCLMQSARGF (102 aa). The 77-residue stretch at 111–187 folds into the Lipoyl-binding domain; the sequence is HQEIGMPSLS…QVGEVIAITV (77 aa). Lys-152 bears the N6-lipoyllysine mark. Residues 195–247 form a disordered region; the sequence is KFKDYTPSSTADAAPTKAEPTPAPPKEEKVKQPSSPPEPKASKPSTPPTGDRV. Over residues 204–214 the composition is skewed to low complexity; it reads TADAAPTKAEP. In terms of domain architecture, Peripheral subunit-binding (PSBD) spans 248–285; that stretch reads FASPLARKLAEDNNVPLSDIEGTGPEGRIVKADIDEYL. Residues His-512 and Asp-516 contribute to the active site.

It belongs to the 2-oxoacid dehydrogenase family. (R)-lipoate serves as cofactor.

It localises to the mitochondrion matrix. The enzyme catalyses N(6)-[(R)-dihydrolipoyl]-L-lysyl-[protein] + acetyl-CoA = N(6)-[(R)-S(8)-acetyldihydrolipoyl]-L-lysyl-[protein] + CoA. The pyruvate dehydrogenase complex catalyzes the overall conversion of pyruvate to acetyl-CoA and CO(2). It contains multiple copies of three enzymatic components: pyruvate dehydrogenase (E1), dihydrolipoamide acetyltransferase (E2) and lipoamide dehydrogenase (E3). This Arabidopsis thaliana (Mouse-ear cress) protein is Dihydrolipoyllysine-residue acetyltransferase component 3 of pyruvate dehydrogenase complex, mitochondrial.